A 261-amino-acid chain; its full sequence is 1-(5-phosphoribosyl)-5-[(5-phosphoribosylamino)methylideneamino] imidazole-4-carboxamide isomerase (261 aa).

Belongs to the HisA/HisF family.

The protein resides in the cytoplasm. The catalysed reaction is 1-(5-phospho-beta-D-ribosyl)-5-[(5-phospho-beta-D-ribosylamino)methylideneamino]imidazole-4-carboxamide = 5-[(5-phospho-1-deoxy-D-ribulos-1-ylimino)methylamino]-1-(5-phospho-beta-D-ribosyl)imidazole-4-carboxamide. It participates in amino-acid biosynthesis; L-histidine biosynthesis; L-histidine from 5-phospho-alpha-D-ribose 1-diphosphate: step 4/9. Its function is as follows. Catalyzes the isomerization of the aminoaldose moiety of ProFAR to the aminoketose of PRFAR. This chain is 1-(5-phosphoribosyl)-5-[(5-phosphoribosylamino)methylideneamino] imidazole-4-carboxamide isomerase, found in Saccharomyces cerevisiae (strain ATCC 204508 / S288c) (Baker's yeast).